A 426-amino-acid chain; its full sequence is Serine hydroxymethyltransferase (426 aa).

(6S)-5,6,7,8-tetrahydrofolate-binding positions include L113 and 117 to 119 (GHL). K222 carries the N6-(pyridoxal phosphate)lysine modification. 363-365 (SAF) provides a ligand contact to (6S)-5,6,7,8-tetrahydrofolate.

The protein belongs to the SHMT family. In terms of assembly, homodimer. Pyridoxal 5'-phosphate serves as cofactor.

It is found in the cytoplasm. It catalyses the reaction (6R)-5,10-methylene-5,6,7,8-tetrahydrofolate + glycine + H2O = (6S)-5,6,7,8-tetrahydrofolate + L-serine. It participates in one-carbon metabolism; tetrahydrofolate interconversion. It functions in the pathway amino-acid biosynthesis; glycine biosynthesis; glycine from L-serine: step 1/1. Its function is as follows. Catalyzes the reversible interconversion of serine and glycine with tetrahydrofolate (THF) serving as the one-carbon carrier. This reaction serves as the major source of one-carbon groups required for the biosynthesis of purines, thymidylate, methionine, and other important biomolecules. Also exhibits THF-independent aldolase activity toward beta-hydroxyamino acids, producing glycine and aldehydes, via a retro-aldol mechanism. The protein is Serine hydroxymethyltransferase of Bacteroides fragilis (strain ATCC 25285 / DSM 2151 / CCUG 4856 / JCM 11019 / LMG 10263 / NCTC 9343 / Onslow / VPI 2553 / EN-2).